Here is a 63-residue protein sequence, read N- to C-terminus: MYLSLLLILLAWTLWLGNSLAWLGVIIFILVINQFQIAREETYLESKFGDEYRRYKQKVRRWL.

A signal peptide spans 1–21 (MYLSLLLILLAWTLWLGNSLA).

This is an uncharacterized protein from Haemophilus influenzae (strain ATCC 51907 / DSM 11121 / KW20 / Rd).